A 372-amino-acid polypeptide reads, in one-letter code: Cytochrome b (372 aa).

Transmembrane regions (helical) follow at residues 25-45 (FGSM…FLAI), 69-90 (WIMQ…YTHI), 105-125 (WLSG…GYVL), and 170-190 (FFAL…VHII). Residues histidine 75 and histidine 89 each contribute to the heme b site. 2 residues coordinate heme b: histidine 174 and histidine 188. An a ubiquinone-binding site is contributed by histidine 193. Transmembrane regions (helical) follow at residues 218–238 (YKDM…LSFS), 280–300 (LGGT…PFTH), 312–332 (LSQI…WTAS), and 339–358 (FITI…ILTP).

Belongs to the cytochrome b family. In terms of assembly, the cytochrome bc1 complex contains 3 respiratory subunits (MT-CYB, CYC1 and UQCRFS1), 2 core proteins (UQCRC1 and UQCRC2) and probably 6 low-molecular weight proteins. Heme b is required as a cofactor.

It localises to the mitochondrion inner membrane. Its function is as follows. Component of the ubiquinol-cytochrome c reductase complex (complex III or cytochrome b-c1 complex) that is part of the mitochondrial respiratory chain. The b-c1 complex mediates electron transfer from ubiquinol to cytochrome c. Contributes to the generation of a proton gradient across the mitochondrial membrane that is then used for ATP synthesis. The chain is Cytochrome b (MT-CYB) from Naja kaouthia (Monocled cobra).